A 366-amino-acid polypeptide reads, in one-letter code: 3-isopropylmalate dehydrogenase (366 aa).

78-91 (GPQWTHLKGSESPE) contributes to the NAD(+) binding site. Substrate contacts are provided by R99, R109, R138, and D227. Residues D227, D251, and D255 each contribute to the Mg(2+) site. Position 285–297 (285–297 (GSAPDIAEKNIAN)) interacts with NAD(+).

Belongs to the isocitrate and isopropylmalate dehydrogenases family. LeuB type 1 subfamily. Homodimer. Mg(2+) is required as a cofactor. The cofactor is Mn(2+).

It is found in the cytoplasm. The enzyme catalyses (2R,3S)-3-isopropylmalate + NAD(+) = 4-methyl-2-oxopentanoate + CO2 + NADH. It functions in the pathway amino-acid biosynthesis; L-leucine biosynthesis; L-leucine from 3-methyl-2-oxobutanoate: step 3/4. Functionally, catalyzes the oxidation of 3-carboxy-2-hydroxy-4-methylpentanoate (3-isopropylmalate) to 3-carboxy-4-methyl-2-oxopentanoate. The product decarboxylates to 4-methyl-2 oxopentanoate. The chain is 3-isopropylmalate dehydrogenase from Blochmanniella pennsylvanica (strain BPEN).